Consider the following 96-residue polypeptide: Protein Vpr (96 aa).

Residues 1-42 (MEQAPEDQGPQREPYNEWTIEILEELKREAVRHFPRPWLHDL) form a homooligomerization region. 3 positions are modified to phosphoserine; by host: Ser79, Ser94, and Ser96.

The protein belongs to the HIV-1 VPR protein family. As to quaternary structure, homooligomer, may form homodimer. Interacts with p6-gag region of the Pr55 Gag precursor protein through a (Leu-X-X)4 motif near the C-terminus of the P6gag protein. Interacts with host UNG. May interact with host RAD23A/HHR23A. Interacts with host VPRBP/DCAF1, leading to hijack the CUL4A-RBX1-DDB1-DCAF1/VPRBP complex, mediating ubiquitination of host proteins such as TERT and ZGPAT and arrest of the cell cycle in G2 phase. In terms of processing, phosphorylated on several residues by host. These phosphorylations regulate VPR activity for the nuclear import of the HIV-1 pre-integration complex.

The protein localises to the virion. It localises to the host nucleus. Its subcellular location is the host extracellular space. In terms of biological role, during virus replication, may deplete host UNG protein, and incude G2-M cell cycle arrest. Acts by targeting specific host proteins for degradation by the 26S proteasome, through association with the cellular CUL4A-DDB1 E3 ligase complex by direct interaction with host VPRPB/DCAF-1. Cell cycle arrest reportedly occurs within hours of infection and is not blocked by antiviral agents, suggesting that it is initiated by the VPR carried into the virion. Additionally, VPR induces apoptosis in a cell cycle dependent manner suggesting that these two effects are mechanistically linked. Detected in the serum and cerebrospinal fluid of AIDS patient, VPR may also induce cell death to bystander cells. During virus entry, plays a role in the transport of the viral pre-integration (PIC) complex to the host nucleus. This function is crucial for viral infection of non-dividing macrophages. May act directly at the nuclear pore complex, by binding nucleoporins phenylalanine-glycine (FG)-repeat regions. This chain is Protein Vpr, found in Human immunodeficiency virus type 1 group M subtype K (isolate 97ZR-EQTB11) (HIV-1).